The sequence spans 336 residues: Glycerol-3-phosphate dehydrogenase [NAD(P)+] (336 aa).

Residues S14, W15, R35, R36, and K109 each contribute to the NADPH site. 2 residues coordinate sn-glycerol 3-phosphate: K109 and G139. Residue A143 coordinates NADPH. Sn-glycerol 3-phosphate is bound by residues K194, D247, S257, R258, and N259. K194 acts as the Proton acceptor in catalysis. Residue R258 participates in NADPH binding. Residue E284 participates in NADPH binding.

This sequence belongs to the NAD-dependent glycerol-3-phosphate dehydrogenase family.

The protein localises to the cytoplasm. The catalysed reaction is sn-glycerol 3-phosphate + NAD(+) = dihydroxyacetone phosphate + NADH + H(+). It carries out the reaction sn-glycerol 3-phosphate + NADP(+) = dihydroxyacetone phosphate + NADPH + H(+). It participates in membrane lipid metabolism; glycerophospholipid metabolism. Functionally, catalyzes the reduction of the glycolytic intermediate dihydroxyacetone phosphate (DHAP) to sn-glycerol 3-phosphate (G3P), the key precursor for phospholipid synthesis. This Streptomyces griseus subsp. griseus (strain JCM 4626 / CBS 651.72 / NBRC 13350 / KCC S-0626 / ISP 5235) protein is Glycerol-3-phosphate dehydrogenase [NAD(P)+].